The primary structure comprises 273 residues: Large ribosomal subunit protein uL2 (273 aa).

Disordered stretches follow at residues Ala31–Thr50 and Arg221–Lys273. A compositionally biased stretch (basic residues) spans Lys253–Lys273.

It belongs to the universal ribosomal protein uL2 family. As to quaternary structure, part of the 50S ribosomal subunit. Forms a bridge to the 30S subunit in the 70S ribosome.

One of the primary rRNA binding proteins. Required for association of the 30S and 50S subunits to form the 70S ribosome, for tRNA binding and peptide bond formation. It has been suggested to have peptidyltransferase activity; this is somewhat controversial. Makes several contacts with the 16S rRNA in the 70S ribosome. This is Large ribosomal subunit protein uL2 from Actinobacillus pleuropneumoniae serotype 7 (strain AP76).